Consider the following 54-residue polypeptide: Relaxin (54 aa).

Gln-1 is modified (pyrrolidone carboxylic acid). Disulfide bonds link Cys-10/Cys-41, Cys-22/Cys-54, and Cys-40/Cys-45.

Belongs to the insulin family. In terms of assembly, heterodimer of a B chain and an A chain linked by two disulfide bonds.

The protein resides in the secreted. Its function is as follows. Relaxin is an ovarian hormone that acts with estrogen to produce dilatation of the birth canal in many mammals. In Balaenoptera acutorostrata (Common minke whale), this protein is Relaxin.